The sequence spans 267 residues: Hydroxynaphthalene reductase-like protein Arp2 (267 aa).

Residues Ile-25, Asn-45, Asp-71, and Asn-98 each coordinate NADP(+). Active-site proton donor residues include Ser-147 and Ser-148. Tyr-162, Lys-166, Val-195, and Thr-197 together coordinate NADP(+). The Proton acceptor role is filled by Tyr-162. The active-site Lowers pKa of active site Tyr is the Lys-166.

Belongs to the short-chain dehydrogenases/reductases (SDR) family.

In terms of biological role, hydroxynaphthalene reductase-like protein; part of the Pks2 gene cluster that mediates the formation of infectious structures (appressoria), enabling these fungi to kill insects faster. The product of the Pks2 gene cluster is different from the one of Pks1 and has still not been identified. This is Hydroxynaphthalene reductase-like protein Arp2 from Metarhizium robertsii (strain ARSEF 23 / ATCC MYA-3075) (Metarhizium anisopliae (strain ARSEF 23)).